We begin with the raw amino-acid sequence, 848 residues long: ATP-dependent Clp protease ATP-binding subunit ClpC1 (848 aa).

The region spanning 2–144 is the Clp R domain; sequence FERFTDRARK…RQQVIQLLSG (143 aa). 2 repeat regions span residues 5–70 and 80–144; these read FTDR…IGQG and FTPR…LLSG. The tract at residues 171–418 is i; that stretch reads LDQFGRNLTA…RMRIRRMTAP (248 aa). 216 to 223 is a binding site for ATP; that stretch reads GEPGVGKT. A UVR domain is found at 425–460; it reads DEKIAEARREKESAIDAQDFEKAASLRDREKTLVAQ. An II region spans residues 479–670; that stretch reads VDDEQIAEVL…VLIFTSNLGT (192 aa). 553–560 lines the ATP pocket; sequence GPSGVGKT. The disordered stretch occupies residues 821 to 848; that stretch reads TGTRKPPAEPDLAKAGAHSAGGPEPAAR.

It belongs to the ClpA/ClpB family. ClpC subfamily.

Functionally, ATP-dependent specificity component of the Clp protease. It directs the protease to specific substrates. Can perform chaperone functions in the absence of ClpP. The protein is ATP-dependent Clp protease ATP-binding subunit ClpC1 (clpC1) of Mycobacterium tuberculosis (strain CDC 1551 / Oshkosh).